The following is a 310-amino-acid chain: Alpha/beta hydrolase domain-containing protein 17A (310 aa).

Catalysis depends on charge relay system residues Ser-190, Asp-255, and His-284. Ser-307 bears the Phosphoserine mark.

It belongs to the AB hydrolase superfamily. ABHD17 family. Post-translationally, palmitoylated on cysteine residues located in a cysteine cluster at the N-terminus which promotes membrane localization. Palmitoylation is required for post-synaptic localization and for depalmitoylating activity towards DLG4/PSD95.

The protein localises to the cell membrane. It localises to the endosome membrane. It is found in the cell projection. The protein resides in the dendritic spine. Its subcellular location is the postsynaptic density membrane. The catalysed reaction is S-hexadecanoyl-L-cysteinyl-[protein] + H2O = L-cysteinyl-[protein] + hexadecanoate + H(+). Its function is as follows. Hydrolyzes fatty acids from S-acylated cysteine residues in proteins. Has depalmitoylating activity towards NRAS. Has depalmitoylating activity towards DLG4/PSD95. May have depalmitoylating activity towards MAP6. The polypeptide is Alpha/beta hydrolase domain-containing protein 17A (Bos taurus (Bovine)).